Consider the following 318-residue polypeptide: Transaldolase (318 aa).

Lysine 132 functions as the Schiff-base intermediate with substrate in the catalytic mechanism.

It belongs to the transaldolase family. Type 1 subfamily. In terms of assembly, homodimer.

The protein localises to the cytoplasm. The enzyme catalyses D-sedoheptulose 7-phosphate + D-glyceraldehyde 3-phosphate = D-erythrose 4-phosphate + beta-D-fructose 6-phosphate. It functions in the pathway carbohydrate degradation; pentose phosphate pathway; D-glyceraldehyde 3-phosphate and beta-D-fructose 6-phosphate from D-ribose 5-phosphate and D-xylulose 5-phosphate (non-oxidative stage): step 2/3. In terms of biological role, transaldolase is important for the balance of metabolites in the pentose-phosphate pathway. This chain is Transaldolase, found in Shewanella baltica (strain OS185).